The primary structure comprises 141 residues: ATP synthase epsilon chain (141 aa).

This sequence belongs to the ATPase epsilon chain family. F-type ATPases have 2 components, CF(1) - the catalytic core - and CF(0) - the membrane proton channel. CF(1) has five subunits: alpha(3), beta(3), gamma(1), delta(1), epsilon(1). CF(0) has three main subunits: a, b and c.

It is found in the cell inner membrane. In terms of biological role, produces ATP from ADP in the presence of a proton gradient across the membrane. The chain is ATP synthase epsilon chain from Pseudomonas aeruginosa (strain LESB58).